Here is a 254-residue protein sequence, read N- to C-terminus: 3-deoxy-manno-octulosonate cytidylyltransferase (254 aa).

Belongs to the KdsB family.

It is found in the cytoplasm. The enzyme catalyses 3-deoxy-alpha-D-manno-oct-2-ulosonate + CTP = CMP-3-deoxy-beta-D-manno-octulosonate + diphosphate. Its pathway is nucleotide-sugar biosynthesis; CMP-3-deoxy-D-manno-octulosonate biosynthesis; CMP-3-deoxy-D-manno-octulosonate from 3-deoxy-D-manno-octulosonate and CTP: step 1/1. It participates in bacterial outer membrane biogenesis; lipopolysaccharide biosynthesis. Its function is as follows. Activates KDO (a required 8-carbon sugar) for incorporation into bacterial lipopolysaccharide in Gram-negative bacteria. This Porphyromonas gingivalis (strain ATCC BAA-308 / W83) protein is 3-deoxy-manno-octulosonate cytidylyltransferase.